Reading from the N-terminus, the 106-residue chain is Pyrimidine/purine nucleoside phosphorylase (106 aa).

Belongs to the nucleoside phosphorylase PpnP family.

It catalyses the reaction a purine D-ribonucleoside + phosphate = a purine nucleobase + alpha-D-ribose 1-phosphate. The catalysed reaction is adenosine + phosphate = alpha-D-ribose 1-phosphate + adenine. The enzyme catalyses cytidine + phosphate = cytosine + alpha-D-ribose 1-phosphate. It carries out the reaction guanosine + phosphate = alpha-D-ribose 1-phosphate + guanine. It catalyses the reaction inosine + phosphate = alpha-D-ribose 1-phosphate + hypoxanthine. The catalysed reaction is thymidine + phosphate = 2-deoxy-alpha-D-ribose 1-phosphate + thymine. The enzyme catalyses uridine + phosphate = alpha-D-ribose 1-phosphate + uracil. It carries out the reaction xanthosine + phosphate = alpha-D-ribose 1-phosphate + xanthine. In terms of biological role, catalyzes the phosphorolysis of diverse nucleosides, yielding D-ribose 1-phosphate and the respective free bases. Can use uridine, adenosine, guanosine, cytidine, thymidine, inosine and xanthosine as substrates. Also catalyzes the reverse reactions. This is Pyrimidine/purine nucleoside phosphorylase from Leptospira interrogans serogroup Icterohaemorrhagiae serovar copenhageni (strain Fiocruz L1-130).